The following is a 485-amino-acid chain: Two-component response regulator ORR31 (485 aa).

One can recognise a Response regulatory domain in the interval 13–138 (RVMPVDGDTK…TMAQLWRVVA (126 aa)). Asp-66 bears the 4-aspartylphosphate mark. The span at 195 to 204 (LTINVDSGSS) shows a compositional bias: polar residues. The tract at residues 195–236 (LTINVDSGSSDGADANPRQKLEHKKDAKGPLGQHVASHLQPQ) is disordered. Residues 211–222 (PRQKLEHKKDAK) show a composition bias toward basic and acidic residues.

This sequence belongs to the ARR family. Type-B subfamily. In terms of processing, two-component system major event consists of a His-to-Asp phosphorelay between a sensor histidine kinase (HK) and a response regulator (RR). In plants, the His-to-Asp phosphorelay involves an additional intermediate named Histidine-containing phosphotransfer protein (HPt). This multistep phosphorelay consists of a His-Asp-His-Asp sequential transfer of a phosphate group between first a His and an Asp of the HK protein, followed by the transfer to a conserved His of the HPt protein and finally the transfer to an Asp in the receiver domain of the RR protein.

In terms of biological role, functions as a response regulator involved in His-to-Asp phosphorelay signal transduction system. Phosphorylation of the Asp residue in the receiver domain activates the ability of the protein to promote the transcription of target genes. May directly activate some type-A response regulators in response to cytokinins. The sequence is that of Two-component response regulator ORR31 from Oryza sativa subsp. japonica (Rice).